The sequence spans 419 residues: MSVEVDFVDKKEVHLRTLKQSGHVGFDSLPDQLVNKSVQNGFVFNVMCIGETGLGKSTLMDTLFNTSFESTPSPHTLPSVKLKAHTYELQESNVRLKLTICDTVGYGDQINKDDSFKAVVDYIDAQFENYLQEELKIKRSLVTCHDSRIHICLYFICPTGHGLKSLDLVCMKKLDSKVNIIPVIAKADTISKVELQRFKAKIIQELNANGVHIYQFPTDDETVAETNTSMNSHIPFAVVGSTEFIKVGNKLIRARQYPWGTVQVENETHCDFVKLREMLIRTNMEDMREKTHTRHYELYRQKRLEQMGFSDVDSDNKPISFQQTFEAKRSNHLAELQSKEEEVRQMFVQRVKEKEAELKESEKDLHAKFEKLKRDHAEEKRKLEESRKALEEDYLDFQRRKQQLATAHHTLTLGKSKKK.

In terms of domain architecture, Septin-type G spans 40-306; the sequence is NGFVFNVMCI…ELYRQKRLEQ (267 aa). Residues 50–57 are G1 motif; it reads GETGLGKS. Residues 50–57, serine 79, glycine 105, 186–194, glycine 240, and arginine 255 each bind GTP; these read GETGLGKS and KADTISKVE. Residues 102-105 form a G3 motif region; sequence DTVG. Positions 185 to 188 are G4 motif; sequence AKAD. Residues 259–269 form an important for dimerization region; that stretch reads WGTVQVENETH.

This sequence belongs to the TRAFAC class TrmE-Era-EngA-EngB-Septin-like GTPase superfamily. Septin GTPase family. May assemble into a multicomponent structure.

The protein localises to the cytoplasm. It localises to the cytoskeleton. Its subcellular location is the spindle. Its function is as follows. Involved in cytokinesis. This is Septin-2 from Drosophila melanogaster (Fruit fly).